The sequence spans 261 residues: Cytochrome c oxidase subunit 3 (261 aa).

Residues 1–15 (MTHQTHAYHMVNPSP) lie on the Mitochondrial matrix side of the membrane. The chain crosses the membrane as a helical span at residues 16-34 (WPLTGALSALLMTSGLIMW). The Mitochondrial intermembrane segment spans residues 35–40 (FHFNSV). A helical membrane pass occupies residues 41–66 (ALLMLGLTTNMLTMYQWWRDVIREST). The Mitochondrial matrix portion of the chain corresponds to 67 to 72 (FQGHHT). A helical transmembrane segment spans residues 73 to 105 (PNVQKGLRYGMILFIISEVLFFTGFFWAFYHSS). The Mitochondrial intermembrane portion of the chain corresponds to 106 to 128 (LAPTPELGGCWPPTGIHPLNPLE). A helical membrane pass occupies residues 129 to 152 (VPLLNTSVLLASGVSITWAHHSLM). Over 153–155 (EGN) the chain is Mitochondrial matrix. Residues 156–183 (RNHMLQALFITIALGVYFTLLQASEYYE) traverse the membrane as a helical segment. Residues 184–190 (APFTISD) lie on the Mitochondrial intermembrane side of the membrane. A helical membrane pass occupies residues 191-223 (GVYGSTFFVATGFHGLHVIIGSTFLIVCFFRQL). The Mitochondrial matrix portion of the chain corresponds to 224–232 (KFHFTSSHH). Residues 233–256 (FGFEAAAWYWHFVDVVWLFLYVSI) traverse the membrane as a helical segment. Residues 257 to 261 (YWWGS) are Mitochondrial intermembrane-facing.

Belongs to the cytochrome c oxidase subunit 3 family. Component of the cytochrome c oxidase (complex IV, CIV), a multisubunit enzyme composed of 14 subunits. The complex is composed of a catalytic core of 3 subunits MT-CO1, MT-CO2 and MT-CO3, encoded in the mitochondrial DNA, and 11 supernumerary subunits COX4I, COX5A, COX5B, COX6A, COX6B, COX6C, COX7A, COX7B, COX7C, COX8 and NDUFA4, which are encoded in the nuclear genome. The complex exists as a monomer or a dimer and forms supercomplexes (SCs) in the inner mitochondrial membrane with NADH-ubiquinone oxidoreductase (complex I, CI) and ubiquinol-cytochrome c oxidoreductase (cytochrome b-c1 complex, complex III, CIII), resulting in different assemblies (supercomplex SCI(1)III(2)IV(1) and megacomplex MCI(2)III(2)IV(2)).

The protein localises to the mitochondrion inner membrane. The enzyme catalyses 4 Fe(II)-[cytochrome c] + O2 + 8 H(+)(in) = 4 Fe(III)-[cytochrome c] + 2 H2O + 4 H(+)(out). In terms of biological role, component of the cytochrome c oxidase, the last enzyme in the mitochondrial electron transport chain which drives oxidative phosphorylation. The respiratory chain contains 3 multisubunit complexes succinate dehydrogenase (complex II, CII), ubiquinol-cytochrome c oxidoreductase (cytochrome b-c1 complex, complex III, CIII) and cytochrome c oxidase (complex IV, CIV), that cooperate to transfer electrons derived from NADH and succinate to molecular oxygen, creating an electrochemical gradient over the inner membrane that drives transmembrane transport and the ATP synthase. Cytochrome c oxidase is the component of the respiratory chain that catalyzes the reduction of oxygen to water. Electrons originating from reduced cytochrome c in the intermembrane space (IMS) are transferred via the dinuclear copper A center (CU(A)) of subunit 2 and heme A of subunit 1 to the active site in subunit 1, a binuclear center (BNC) formed by heme A3 and copper B (CU(B)). The BNC reduces molecular oxygen to 2 water molecules using 4 electrons from cytochrome c in the IMS and 4 protons from the mitochondrial matrix. In Nanger granti (Grant's gazelle), this protein is Cytochrome c oxidase subunit 3 (MT-CO3).